A 379-amino-acid polypeptide reads, in one-letter code: Cytochrome b (379 aa).

4 consecutive transmembrane segments (helical) span residues 33–53, 77–98, 113–133, and 178–198; these read FGSL…FLAM, WLIR…FIHV, WNIG…GYVL, and FFAF…VHLL. Heme b-binding residues include H83 and H97. Heme b is bound by residues H182 and H196. H201 serves as a coordination point for a ubiquinone. Transmembrane regions (helical) follow at residues 226-246, 288-308, 320-340, and 347-367; these read IKDL…ALFF, LGGV…PLLN, ITQT…WIGG, and FTTI…IIMP.

This sequence belongs to the cytochrome b family. As to quaternary structure, the cytochrome bc1 complex contains 11 subunits: 3 respiratory subunits (MT-CYB, CYC1 and UQCRFS1), 2 core proteins (UQCRC1 and UQCRC2) and 6 low-molecular weight proteins (UQCRH/QCR6, UQCRB/QCR7, UQCRQ/QCR8, UQCR10/QCR9, UQCR11/QCR10 and a cleavage product of UQCRFS1). This cytochrome bc1 complex then forms a dimer. The cofactor is heme b.

The protein localises to the mitochondrion inner membrane. Functionally, component of the ubiquinol-cytochrome c reductase complex (complex III or cytochrome b-c1 complex) that is part of the mitochondrial respiratory chain. The b-c1 complex mediates electron transfer from ubiquinol to cytochrome c. Contributes to the generation of a proton gradient across the mitochondrial membrane that is then used for ATP synthesis. The polypeptide is Cytochrome b (MT-CYB) (Deltamys kempi (Kemp's grass mouse)).